The following is a 556-amino-acid chain: Dihydroxy-acid dehydratase (556 aa).

Cysteine 47 serves as a coordination point for [2Fe-2S] cluster. Aspartate 79 is a Mg(2+) binding site. Cysteine 120 contributes to the [2Fe-2S] cluster binding site. Positions 121 and 122 each coordinate Mg(2+). Lysine 122 is subject to N6-carboxylysine. Residue cysteine 192 participates in [2Fe-2S] cluster binding. Mg(2+) is bound at residue glutamate 444. Serine 470 acts as the Proton acceptor in catalysis.

Belongs to the IlvD/Edd family. As to quaternary structure, homodimer. [2Fe-2S] cluster is required as a cofactor. Mg(2+) serves as cofactor.

The enzyme catalyses (2R)-2,3-dihydroxy-3-methylbutanoate = 3-methyl-2-oxobutanoate + H2O. It carries out the reaction (2R,3R)-2,3-dihydroxy-3-methylpentanoate = (S)-3-methyl-2-oxopentanoate + H2O. It participates in amino-acid biosynthesis; L-isoleucine biosynthesis; L-isoleucine from 2-oxobutanoate: step 3/4. Its pathway is amino-acid biosynthesis; L-valine biosynthesis; L-valine from pyruvate: step 3/4. In terms of biological role, functions in the biosynthesis of branched-chain amino acids. Catalyzes the dehydration of (2R,3R)-2,3-dihydroxy-3-methylpentanoate (2,3-dihydroxy-3-methylvalerate) into 2-oxo-3-methylpentanoate (2-oxo-3-methylvalerate) and of (2R)-2,3-dihydroxy-3-methylbutanoate (2,3-dihydroxyisovalerate) into 2-oxo-3-methylbutanoate (2-oxoisovalerate), the penultimate precursor to L-isoleucine and L-valine, respectively. This chain is Dihydroxy-acid dehydratase, found in Prochlorococcus marinus (strain MIT 9303).